A 197-amino-acid chain; its full sequence is Pyridoxal 5'-phosphate synthase subunit PdxT (197 aa).

53–55 (GES) provides a ligand contact to L-glutamine. The active-site Nucleophile is Cys-85. L-glutamine-binding positions include Arg-114 and 142–143 (IR). Active-site charge relay system residues include His-179 and Glu-181.

It belongs to the glutaminase PdxT/SNO family. In terms of assembly, in the presence of PdxS, forms a dodecamer of heterodimers. Only shows activity in the heterodimer.

The catalysed reaction is aldehydo-D-ribose 5-phosphate + D-glyceraldehyde 3-phosphate + L-glutamine = pyridoxal 5'-phosphate + L-glutamate + phosphate + 3 H2O + H(+). It carries out the reaction L-glutamine + H2O = L-glutamate + NH4(+). It functions in the pathway cofactor biosynthesis; pyridoxal 5'-phosphate biosynthesis. Its function is as follows. Catalyzes the hydrolysis of glutamine to glutamate and ammonia as part of the biosynthesis of pyridoxal 5'-phosphate. The resulting ammonia molecule is channeled to the active site of PdxS. This Thermococcus gammatolerans (strain DSM 15229 / JCM 11827 / EJ3) protein is Pyridoxal 5'-phosphate synthase subunit PdxT.